A 298-amino-acid chain; its full sequence is Inosose dehydratase (298 aa).

This sequence belongs to the IolE/MocC family. Requires glutathione as cofactor. The cofactor is Co(2+). It depends on Mn(2+) as a cofactor.

It carries out the reaction scyllo-inosose = 3D-3,5/4-trihydroxycyclohexane-1,2-dione + H2O. Catalyzes the dehydration of inosose (2-keto-myo-inositol, 2KMI or 2,4,6/3,5-pentahydroxycyclohexanone) to 3D-(3,5/4)-trihydroxycyclohexane-1,2-dione (D-2,3-diketo-4-deoxy-epi-inositol). This Yersinia enterocolitica serotype O:8 / biotype 1B (strain NCTC 13174 / 8081) protein is Inosose dehydratase.